The primary structure comprises 291 residues: Ribonuclease Z (291 aa).

7 residues coordinate Zn(2+): His-61, His-63, Asp-65, His-66, His-133, Asp-201, and His-257. Residue Asp-65 is the Proton acceptor of the active site.

This sequence belongs to the RNase Z family. In terms of assembly, homodimer. Zn(2+) is required as a cofactor.

The enzyme catalyses Endonucleolytic cleavage of RNA, removing extra 3' nucleotides from tRNA precursor, generating 3' termini of tRNAs. A 3'-hydroxy group is left at the tRNA terminus and a 5'-phosphoryl group is left at the trailer molecule.. In terms of biological role, zinc phosphodiesterase, which displays some tRNA 3'-processing endonuclease activity. Probably involved in tRNA maturation, by removing a 3'-trailer from precursor tRNA. This Saccharolobus islandicus (strain M.16.27) (Sulfolobus islandicus) protein is Ribonuclease Z.